The sequence spans 65 residues: Large ribosomal subunit protein bL35 (65 aa).

This sequence belongs to the bacterial ribosomal protein bL35 family.

This is Large ribosomal subunit protein bL35 from Psychrobacter sp. (strain PRwf-1).